The sequence spans 537 residues: Chaperonin GroEL (537 aa).

ATP contacts are provided by residues 30–33 (TLGP), 87–91 (DGTTT), Gly-414, 477–479 (DAV), and Asp-493.

It belongs to the chaperonin (HSP60) family. Forms a cylinder of 14 subunits composed of two heptameric rings stacked back-to-back. Interacts with the co-chaperonin GroES.

The protein localises to the cytoplasm. The enzyme catalyses ATP + H2O + a folded polypeptide = ADP + phosphate + an unfolded polypeptide.. In terms of biological role, together with its co-chaperonin GroES, plays an essential role in assisting protein folding. The GroEL-GroES system forms a nano-cage that allows encapsulation of the non-native substrate proteins and provides a physical environment optimized to promote and accelerate protein folding. The polypeptide is Chaperonin GroEL (Coprothermobacter proteolyticus (strain ATCC 35245 / DSM 5265 / OCM 4 / BT)).